The sequence spans 185 residues: Testis development-related protein (185 aa).

Disordered stretches follow at residues 1–29 (MWKLGRGRVLLDEPPEEEDGLRGGPPPAA) and 121–156 (ADPEDTVGGHPSWSGWEDDAKGSTKYTSLASSANSS).

The protein belongs to the TDRP family. Interacts with PRM2. Expressed in spermatogenic cells, especially in spermatocytes (at protein level).

Its subcellular location is the nucleus. The protein resides in the cytoplasm. Its function is as follows. Contributes to normal sperm motility, but not essential for male fertility. The polypeptide is Testis development-related protein (TDRP) (Homo sapiens (Human)).